A 264-amino-acid polypeptide reads, in one-letter code: Hemin import ATP-binding protein HmuV (264 aa).

The 240-residue stretch at 2–241 (IEVSGVSVRL…ETMLSVFGLR (240 aa)) folds into the ABC transporter domain. 34–41 (GPNGSGKT) is an ATP binding site.

It belongs to the ABC transporter superfamily. Heme (hemin) importer (TC 3.A.1.14.5) family. In terms of assembly, the complex is composed of two ATP-binding proteins (HmuV), two transmembrane proteins (HmuU) and a solute-binding protein (HmuT).

The protein localises to the cell inner membrane. Part of the ABC transporter complex HmuTUV involved in hemin import. Responsible for energy coupling to the transport system. This chain is Hemin import ATP-binding protein HmuV, found in Rhizobium leguminosarum.